The chain runs to 469 residues: MNKIDELTPKKVVEKLDNYIIGQKEAKKQVAIALRNRIRRLSLSEDVRKDVIPKNILMIGSTGVGKTEIARRLAEVANAPFVKVEATRFTEVGYVGKNVESMVRELVDSSVNMVKKEMMEEVKDKAQRLVEERIVEVLVPSKKRAKAQPSFMDVMQLFNQNAEYSQNKDYDENEDENIRRRREELLEKLRNGELEDVEIEVEVEEQSSPMFAGLGPELEDMGIQFGEMFQNLMPKKKKRRRMKISEARKVLEPIESEKLIDQDKLIQEGVSRAENSGIIFIDEIDKITSKGVSSGPDVSREGVQRDLLPIVEGTTVMTKYGSISTDYILFIAAGAFSEAKPSDLIPELQGRFPIRAELSDLTKEDFIRILTQPKNAILKQYQYLLQTDGVKIEFTEDGVERMADIAFELNEKVENIGARRLYTVVEKVLEEVSFEAPASGEWELKIDSNYVDLRLGKVYGDEDLREYIL.

ATP contacts are provided by residues I21, 63–68, D282, E347, and R419; that span reads GVGKTE.

It belongs to the ClpX chaperone family. HslU subfamily. In terms of assembly, a double ring-shaped homohexamer of HslV is capped on each side by a ring-shaped HslU homohexamer. The assembly of the HslU/HslV complex is dependent on binding of ATP.

The protein resides in the cytoplasm. In terms of biological role, ATPase subunit of a proteasome-like degradation complex; this subunit has chaperone activity. The binding of ATP and its subsequent hydrolysis by HslU are essential for unfolding of protein substrates subsequently hydrolyzed by HslV. HslU recognizes the N-terminal part of its protein substrates and unfolds these before they are guided to HslV for hydrolysis. This Petrotoga mobilis (strain DSM 10674 / SJ95) protein is ATP-dependent protease ATPase subunit HslU.